The primary structure comprises 89 residues: Small ribosomal subunit protein uS14A (89 aa).

This sequence belongs to the universal ribosomal protein uS14 family. Part of the 30S ribosomal subunit. Contacts proteins S3 and S10.

Functionally, binds 16S rRNA, required for the assembly of 30S particles and may also be responsible for determining the conformation of the 16S rRNA at the A site. This is Small ribosomal subunit protein uS14A from Staphylococcus epidermidis (strain ATCC 35984 / DSM 28319 / BCRC 17069 / CCUG 31568 / BM 3577 / RP62A).